Consider the following 58-residue polypeptide: Sodium/potassium-transporting ATPase subunit gamma (58 aa).

A helical membrane pass occupies residues 20–39 (NGGLIFAALAFIVGLVIILS).

This sequence belongs to the FXYD family. As to quaternary structure, regulatory subunit of the sodium/potassium-transporting ATPase which is composed of a catalytic alpha subunit, an auxiliary non-catalytic beta subunit and an additional regulatory subunit. In terms of tissue distribution, highest levels expressed in the kidney and spleen. Restricted to the basolateral membrane in renal epithelial cells and varies in its level of expression along the nephron.

It is found in the membrane. Its function is as follows. May be involved in forming the receptor site for cardiac glycoside binding or may modulate the transport function of the sodium ATPase. This chain is Sodium/potassium-transporting ATPase subunit gamma (FXYD2), found in Bos taurus (Bovine).